A 537-amino-acid polypeptide reads, in one-letter code: Pentatricopeptide repeat-containing protein At1g02370, mitochondrial (537 aa).

The transit peptide at 1-18 directs the protein to the mitochondrion; that stretch reads MNFRNLIASGSRLGKRFC. PPR repeat units lie at residues 171-205, 206-240, 241-275, 277-307, 312-346, 347-377, and 382-416; these read HQST…NFVN, NSLP…GISP, CGVT…SEAK, TWNT…MEEK, NRDS…RPEV, NNLS…WESK, and DMRL…SKGP.

Belongs to the PPR family. P subfamily.

It localises to the mitochondrion. The protein is Pentatricopeptide repeat-containing protein At1g02370, mitochondrial of Arabidopsis thaliana (Mouse-ear cress).